The primary structure comprises 127 residues: Lysozyme C (127 aa).

The 127-residue stretch at Lys1–Cys127 folds into the C-type lysozyme domain. 4 disulfide bridges follow: Cys6-Cys127, Cys30-Cys115, Cys64-Cys80, and Cys76-Cys94. Residues Glu35 and Asp52 contribute to the active site. Residues Lys82, Asp85, Asn87, Asp90, and Asp91 each coordinate Ca(2+).

The protein belongs to the glycosyl hydrolase 22 family. In terms of assembly, monomer. Requires Ca(2+) as cofactor.

It localises to the secreted. The catalysed reaction is Hydrolysis of (1-&gt;4)-beta-linkages between N-acetylmuramic acid and N-acetyl-D-glucosamine residues in a peptidoglycan and between N-acetyl-D-glucosamine residues in chitodextrins.. Its function is as follows. Lysozymes have primarily a bacteriolytic function; those in tissues and body fluids are associated with the monocyte-macrophage system and enhance the activity of immunoagents. The sequence is that of Lysozyme C (LYZ) from Columba livia (Rock dove).